We begin with the raw amino-acid sequence, 156 residues long: CRIB domain-containing protein RIC11 (156 aa).

The CRIB domain maps to 26–39 (IGHPTEVKHVAHIG). The disordered stretch occupies residues 87–156 (QDQLNISDRI…SMVSRLNSNA (70 aa)). Residues 109-120 (IHTKSKNRRKKP) are compositionally biased toward basic residues. Over residues 121–142 (SSTSSPRSRPSPKSSRSMGLSK) the composition is skewed to low complexity.

Functions as a downstream effector of Rho-related GTP binding proteins of the 'Rho of Plants' (ROPs) family. Participates in the propagation of ROP GTPase signals in specific cellular responses. This is CRIB domain-containing protein RIC11 (RIC11) from Arabidopsis thaliana (Mouse-ear cress).